The following is a 272-amino-acid chain: Ribosomal RNA small subunit methyltransferase J (272 aa).

S-adenosyl-L-methionine is bound by residues 120 to 121 (RD), 136 to 137 (ER), 171 to 172 (SS), and Asp-188.

This sequence belongs to the methyltransferase superfamily. RsmJ family.

Its subcellular location is the cytoplasm. It carries out the reaction guanosine(1516) in 16S rRNA + S-adenosyl-L-methionine = N(2)-methylguanosine(1516) in 16S rRNA + S-adenosyl-L-homocysteine + H(+). In terms of biological role, specifically methylates the guanosine in position 1516 of 16S rRNA. This Colwellia psychrerythraea (strain 34H / ATCC BAA-681) (Vibrio psychroerythus) protein is Ribosomal RNA small subunit methyltransferase J.